A 267-amino-acid polypeptide reads, in one-letter code: NAD kinase 2 (267 aa).

The Proton acceptor role is filled by D52. NAD(+) contacts are provided by residues 52 to 53 (DA), 124 to 125 (NE), R151, D153, 164 to 169 (TAYNKS), and A188.

It belongs to the NAD kinase family. The cofactor is a divalent metal cation.

It localises to the cytoplasm. It carries out the reaction NAD(+) + ATP = ADP + NADP(+) + H(+). Involved in the regulation of the intracellular balance of NAD and NADP, and is a key enzyme in the biosynthesis of NADP. Catalyzes specifically the phosphorylation on 2'-hydroxyl of the adenosine moiety of NAD to yield NADP. This is NAD kinase 2 from Bacillus cereus (strain ATCC 10987 / NRS 248).